Here is a 138-residue protein sequence, read N- to C-terminus: Acidic phospholipase A2 Cvv-E6f (138 aa).

The N-terminal stretch at 1–16 (MRTLWIVAVLLLGVEG) is a signal peptide. Intrachain disulfides connect cysteine 42–cysteine 131, cysteine 44–cysteine 60, cysteine 59–cysteine 111, cysteine 65–cysteine 138, cysteine 66–cysteine 104, cysteine 73–cysteine 97, and cysteine 91–cysteine 102. The Ca(2+) site is built by tyrosine 43, glycine 45, and glycine 47. The active site involves histidine 63. Ca(2+) is bound at residue aspartate 64. The active site involves aspartate 105.

The cofactor is Ca(2+). As to expression, expressed by the venom gland.

The protein localises to the secreted. The catalysed reaction is a 1,2-diacyl-sn-glycero-3-phosphocholine + H2O = a 1-acyl-sn-glycero-3-phosphocholine + a fatty acid + H(+). Its function is as follows. Snake venom phospholipase A2 (PLA2) that shows very low inhibition of ADP-induced platelet aggregation in platelet-rich plasma of human, rabbit and guinea pig. In vivo, shows efficient edema-inducing activities in rat paws. PLA2 catalyzes the calcium-dependent hydrolysis of the 2-acyl groups in 3-sn-phosphoglycerides. This is Acidic phospholipase A2 Cvv-E6f from Crotalus viridis viridis (Prairie rattlesnake).